The primary structure comprises 222 residues: 7-cyano-7-deazaguanine synthase (222 aa).

9–19 contacts ATP; it reads ISGGMDSALSA. The Zn(2+) site is built by cysteine 188, cysteine 196, cysteine 199, and cysteine 202.

It belongs to the QueC family. Zn(2+) serves as cofactor.

The enzyme catalyses 7-carboxy-7-deazaguanine + NH4(+) + ATP = 7-cyano-7-deazaguanine + ADP + phosphate + H2O + H(+). The protein operates within purine metabolism; 7-cyano-7-deazaguanine biosynthesis. Its function is as follows. Catalyzes the ATP-dependent conversion of 7-carboxy-7-deazaguanine (CDG) to 7-cyano-7-deazaguanine (preQ(0)). This Sulfurovum sp. (strain NBC37-1) protein is 7-cyano-7-deazaguanine synthase.